The sequence spans 301 residues: Probable alpha-L-glutamate ligase (301 aa).

Positions 104-287 constitute an ATP-grasp domain; that stretch reads LQLLSRKGIG…VADMIFEFIE (184 aa). ATP is bound by residues Lys141, 178 to 179, Asp187, and 211 to 213; these read EF and RSN. Mg(2+)-binding residues include Asp248, Glu260, and Asn262. The Mn(2+) site is built by Asp248, Glu260, and Asn262.

It belongs to the RimK family. It depends on Mg(2+) as a cofactor. Mn(2+) serves as cofactor.

In Vibrio atlanticus (strain LGP32) (Vibrio splendidus (strain Mel32)), this protein is Probable alpha-L-glutamate ligase.